A 77-amino-acid polypeptide reads, in one-letter code: Large ribosomal subunit protein uL29 (77 aa).

Belongs to the universal ribosomal protein uL29 family.

In Corynebacterium urealyticum (strain ATCC 43042 / DSM 7109), this protein is Large ribosomal subunit protein uL29.